The chain runs to 361 residues: Zinc transporter ZIP13 (361 aa).

The Lumenal portion of the chain corresponds to 1–6 (MPGCPC). A helical transmembrane segment spans residues 7-27 (PGCGMAGQRLLFLTVLALELL). The Cytoplasmic portion of the chain corresponds to 28 to 68 (ERAGGSQPALRSLGAAAACRLDSKESESWGALLSGERLDTW). A helical transmembrane segment spans residues 69 to 89 (ICSLLGSLMVGLSGVFPLLVI). The Lumenal portion of the chain corresponds to 90-108 (PLEMGTMLQSEAGAWRLKQ). Residues 109 to 129 (LLSFALGGLLGNVFLHLLPEA) traverse the membrane as a helical segment. The Cytoplasmic portion of the chain corresponds to 130–150 (WAYTCNISPGVEGQSLQRQQQ). Residues 151–171 (LGLWVIAGFLTFLALEKMFLN) traverse the membrane as a helical segment. The Lumenal portion of the chain corresponds to 172–233 (CKEEDPSQAP…TIDNFTHGLA (62 aa)). The helical transmembrane segment at 234–254 (VAASFLVSKKIGLLTTMAILL) threads the bilayer. The XEXPHE-motif motif lies at 255–260 (HEIPHE). Residues 255–276 (HEIPHEVGDFAILLRAGFDRWT) lie on the Cytoplasmic side of the membrane. The chain crosses the membrane as a helical span at residues 277-297 (AAKLQFSTALGGLLGACFAIC). Over 298–307 (TQSPKGVEET) the chain is Lumenal. The helical transmembrane segment at 308–328 (VVWTLPFTSGGFLYVALVNVL) threads the bilayer. Residues 329–340 (PDLLEEDDPWHL) are Cytoplasmic-facing. A helical transmembrane segment spans residues 341–361 (NPPLPTGTPCSRCCCSAPVSW).

This sequence belongs to the ZIP transporter (TC 2.A.5) family. Homodimer.

The protein localises to the golgi apparatus membrane. Its subcellular location is the cytoplasmic vesicle membrane. The protein resides in the endoplasmic reticulum membrane. The catalysed reaction is Zn(2+)(in) = Zn(2+)(out). In terms of biological role, functions as a zinc transporter transporting Zn(2+) from the Golgi apparatus to the cytosol and thus influences the zinc level at least in areas of the cytosol. May regulate beige adipocyte differentiation. In Rattus norvegicus (Rat), this protein is Zinc transporter ZIP13.